Consider the following 271-residue polypeptide: Formamidopyrimidine-DNA glycosylase (271 aa).

P2 acts as the Schiff-base intermediate with DNA in catalysis. The active-site Proton donor is the E3. The active-site Proton donor; for beta-elimination activity is the K57. Residues H90, R109, and K151 each contribute to the DNA site. The FPG-type zinc-finger motif lies at 236-270; that stretch reads HVYGRGGETCTQCGHLLSEIKLGQRATVFCSLCQK. Residue R260 is the Proton donor; for delta-elimination activity of the active site.

This sequence belongs to the FPG family. Monomer. The cofactor is Zn(2+).

The enzyme catalyses Hydrolysis of DNA containing ring-opened 7-methylguanine residues, releasing 2,6-diamino-4-hydroxy-5-(N-methyl)formamidopyrimidine.. It catalyses the reaction 2'-deoxyribonucleotide-(2'-deoxyribose 5'-phosphate)-2'-deoxyribonucleotide-DNA = a 3'-end 2'-deoxyribonucleotide-(2,3-dehydro-2,3-deoxyribose 5'-phosphate)-DNA + a 5'-end 5'-phospho-2'-deoxyribonucleoside-DNA + H(+). Functionally, involved in base excision repair of DNA damaged by oxidation or by mutagenic agents. Acts as a DNA glycosylase that recognizes and removes damaged bases. Has a preference for oxidized purines, such as 7,8-dihydro-8-oxoguanine (8-oxoG). Has AP (apurinic/apyrimidinic) lyase activity and introduces nicks in the DNA strand. Cleaves the DNA backbone by beta-delta elimination to generate a single-strand break at the site of the removed base with both 3'- and 5'-phosphates. The polypeptide is Formamidopyrimidine-DNA glycosylase (Shewanella halifaxensis (strain HAW-EB4)).